Here is a 274-residue protein sequence, read N- to C-terminus: ATP synthase subunit a (274 aa).

A run of 5 helical transmembrane segments spans residues 40-60, 110-130, 149-169, 224-244, and 245-265; these read FWVCNFDSIFLSIFLGLVILI, IFVWIFLMNLMDLIPIDLVPF, DVNITISMSLVVFLLIIFYSI, IFILISGLLPWWLQWILSVPW, and AIFHILIISLQSFIFMVLTIV.

It belongs to the ATPase A chain family. In terms of assembly, F-type ATPases have 2 components, CF(1) - the catalytic core - and CF(0) - the membrane proton channel. CF(1) has five subunits: alpha(3), beta(3), gamma(1), delta(1), epsilon(1). CF(0) has three main subunits: a(1), b(2) and c(9-12). The alpha and beta chains form an alternating ring which encloses part of the gamma chain. CF(1) is attached to CF(0) by a central stalk formed by the gamma and epsilon chains, while a peripheral stalk is formed by the delta and b chains.

The protein localises to the cell membrane. Key component of the proton channel; it plays a direct role in the translocation of protons across the membrane. The chain is ATP synthase subunit a from Buchnera aphidicola subsp. Baizongia pistaciae (strain Bp).